The primary structure comprises 220 residues: Ribosomal RNA large subunit methyltransferase E (220 aa).

S-adenosyl-L-methionine is bound by residues glycine 60, tryptophan 62, aspartate 92, aspartate 108, and aspartate 133. The active-site Proton acceptor is lysine 173.

It belongs to the class I-like SAM-binding methyltransferase superfamily. RNA methyltransferase RlmE family.

Its subcellular location is the cytoplasm. The catalysed reaction is uridine(2552) in 23S rRNA + S-adenosyl-L-methionine = 2'-O-methyluridine(2552) in 23S rRNA + S-adenosyl-L-homocysteine + H(+). Functionally, specifically methylates the uridine in position 2552 of 23S rRNA at the 2'-O position of the ribose in the fully assembled 50S ribosomal subunit. The chain is Ribosomal RNA large subunit methyltransferase E from Paraburkholderia phymatum (strain DSM 17167 / CIP 108236 / LMG 21445 / STM815) (Burkholderia phymatum).